The sequence spans 1120 residues: Vacuolar cation-chloride cotransporter 1 (1120 aa).

Residues 1-21 form a disordered region; the sequence is MVSRFYQIPGTHRPSSAISSS. Over 1–62 the chain is Cytoplasmic; sequence MVSRFYQIPG…YDPDNPNKDK (62 aa). Phosphoserine is present on serine 34. The chain crosses the membrane as a helical span at residues 63–83; that stretch reads LGTYDGVFVPTALNVLSILMF. The Vacuolar segment spans residues 84–85; it reads LR. The helical transmembrane segment at 86-106 threads the bilayer; it reads FGFILGQLGIICTIGLLLLSY. Over 107–145 the chain is Cytoplasmic; that stretch reads TINLLTTLSISAISTNGTVRGGGAYYMISRSLGPEFGGS. Residues 146-166 form a helical membrane-spanning segment; the sequence is IGLVFFLGQVFNAGMNAVGII. Over 167–193 the chain is Vacuolar; the sequence is EPLLYNLGYSAQGEPPAALGELLPRGH. The helical transmembrane segment at 194-214 threads the bilayer; sequence WHEFTYATVILFLCFSVAFVG. Residues 215 to 221 lie on the Cytoplasmic side of the membrane; the sequence is SQTVSRA. The helical transmembrane segment at 222–242 threads the bilayer; that stretch reads GNILFLVLAASIFSIPLSALI. Topologically, residues 243-283 are vacuolar; sequence RSPFTEGGISYTGPSWQTFHDNLLPHLTKGAAGSLLKGKET. The chain crosses the membrane as a helical span at residues 284–304; that stretch reads FNDLFGVFFPATAGIFAGAGM. Over 305-317 the chain is Cytoplasmic; that stretch reads SSELRKPSKSIPK. The chain crosses the membrane as a helical span at residues 318-338; that stretch reads GTLWGLLFTFICYAVVVFSMG. The Vacuolar portion of the chain corresponds to 339–360; it reads CSIPRRSLYDEVQIIQTISSVQ. A helical membrane pass occupies residues 361–381; that stretch reads WVIFMGEMATSLFSIIVGMLG. Topologically, residues 382 to 393 are cytoplasmic; the sequence is AAYVLEAIAKDN. A helical transmembrane segment spans residues 394-414; that stretch reads IIPGLEIFAHSPLYSLIFTWI. The Vacuolar segment spans residues 415–430; it reads LTQLCLFSDVNKIATF. The chain crosses the membrane as a helical span at residues 431-451; the sequence is ITMTFLMTFVVMNLACFLLGI. Residues 452–462 lie on the Cytoplasmic side of the membrane; that stretch reads SSAPNFRPSFK. A helical transmembrane segment spans residues 463 to 482; sequence YFNRYTTAIGALLSVVAMLI. The Vacuolar portion of the chain corresponds to 483–487; that stretch reads VDGIS. Residues 488-506 traverse the membrane as a helical segment; that stretch reads ASVLFLAMILLFLFIHYFS. Residues 507-1120 lie on the Cytoplasmic side of the membrane; sequence PPKSWGDVSQ…SQTMTVTTAL (614 aa). Phosphoserine is present on residues serine 654, serine 915, and serine 918.

The protein belongs to the SLC12A transporter family.

It is found in the vacuole membrane. Functionally, catalyzes the coordinated symport of chloride with potassium ions across the vacuolar membrane. Involved in vacuolar osmoregulation. In Saccharomyces cerevisiae (strain ATCC 204508 / S288c) (Baker's yeast), this protein is Vacuolar cation-chloride cotransporter 1.